Reading from the N-terminus, the 555-residue chain is Transmembrane protein 87B (555 aa).

A signal peptide spans 1–42; sequence MAAACRSEAGLLPSLLCRRPAGAQLLRVALCLLCWVPAAVDA. The Lumenal segment spans residues 43–216; it reads VPELGLWTRT…HGYISASDWP (174 aa). N-linked (GlcNAc...) asparagine glycans are attached at residues N68, N160, and N198. A helical membrane pass occupies residues 217–237; sequence LMIFYMVMCIVYILYGVLWLL. The Cytoplasmic portion of the chain corresponds to 238–248; it reads WSACYWKDILR. The chain crosses the membrane as a helical span at residues 249–269; that stretch reads IQFWIAAVIFLGMLEKAVFYS. At 270–300 the chain is on the lumenal side; that stretch reads EYQNINSTGLSTQGLLIFAELISAVKRTLAR. N-linked (GlcNAc...) asparagine glycosylation occurs at N275. A helical transmembrane segment spans residues 301-321; sequence LLVIIVSLGYGIVKPRLGTVM. The Cytoplasmic portion of the chain corresponds to 322-323; the sequence is HR. A helical membrane pass occupies residues 324–344; sequence VIGLGLLYLIFAAIEGVMRVI. The Lumenal segment spans residues 345–351; that stretch reads GGSKHLA. Residues 352–372 form a helical membrane-spanning segment; it reads VVLTDIVLAVIDSIFVWFIFI. The Cytoplasmic portion of the chain corresponds to 373-394; it reads SLAQTMKTLRLRKNTVKFSLYR. The helical transmembrane segment at 395-415 threads the bilayer; that stretch reads HFTNTLIFAVLASIVFMVWTT. At 416-429 the chain is on the lumenal side; sequence KTFRIAKCQSDWME. A helical transmembrane segment spans residues 430-450; sequence LWVDDAFWSFLFSVILIVIMF. Over 451 to 555 the chain is Cytoplasmic; it reads LWRPSANNQR…EKMFSSEKIM (105 aa). Phosphoserine occurs at positions 470, 497, and 534.

It belongs to the LU7TM family. TMEM87 subfamily.

It is found in the golgi apparatus membrane. In terms of biological role, may be involved in retrograde transport from endosomes to the trans-Golgi network (TGN). This is Transmembrane protein 87B from Mus musculus (Mouse).